A 497-amino-acid polypeptide reads, in one-letter code: Succinate-semialdehyde dehydrogenase [NADP(+)] (497 aa).

The Proton acceptor role is filled by glutamate 264. Cysteine 298 serves as the catalytic Nucleophile.

Belongs to the aldehyde dehydrogenase family. Homotetramer.

The protein resides in the cytoplasm. The enzyme catalyses succinate semialdehyde + NAD(+) + H2O = succinate + NADH + 2 H(+). The catalysed reaction is succinate semialdehyde + NADP(+) + H2O = succinate + NADPH + 2 H(+). The protein operates within amino-acid degradation; 4-aminobutanoate degradation. Its activity is regulated as follows. Inhibited by AMP, ADP anf ATP. In terms of biological role, catalyzes the oxidation of succinate semialdehyde to succinate. Can utilize both NAD(+) or NADP(+) as a coenzyme, but has a 2.5-fold lower activity with NADP(+) than with NAD(+). Functions in a gamma-aminobutyrate (GABA) degradation pathway that allows growth utilizing GABA as a nitrogen source. Functions in the GABA shunt, which allows to bypass 2 reactions in the TCA cycle by removing alpha-ketoglutarate from the cycle and feeding succinate and NADH back into the cycle. The chain is Succinate-semialdehyde dehydrogenase [NADP(+)] from Saccharomyces cerevisiae (strain ATCC 204508 / S288c) (Baker's yeast).